The chain runs to 568 residues: Small ribosomal subunit protein bS1 (568 aa).

S1 motif domains are found at residues 39 to 100, 118 to 184, 205 to 273, 290 to 360, 377 to 447, and 464 to 533; these read KTVV…LSRE, GEFV…VSRR, GMIL…LGIK, GKKM…LSIK, GTII…LGIK, and GTIV…LSVK.

This sequence belongs to the bacterial ribosomal protein bS1 family.

In terms of biological role, binds mRNA; thus facilitating recognition of the initiation point. It is needed to translate mRNA with a short Shine-Dalgarno (SD) purine-rich sequence. This is Small ribosomal subunit protein bS1 (rpsA) from Rickettsia typhi (strain ATCC VR-144 / Wilmington).